The following is a 162-amino-acid chain: Ribosomal RNA large subunit methyltransferase H (162 aa).

S-adenosyl-L-methionine contacts are provided by residues Leu-78, Gly-109, and 128–133; that span reads LSALTL.

Belongs to the RNA methyltransferase RlmH family. Homodimer.

The protein resides in the cytoplasm. It catalyses the reaction pseudouridine(1915) in 23S rRNA + S-adenosyl-L-methionine = N(3)-methylpseudouridine(1915) in 23S rRNA + S-adenosyl-L-homocysteine + H(+). Specifically methylates the pseudouridine at position 1915 (m3Psi1915) in 23S rRNA. This chain is Ribosomal RNA large subunit methyltransferase H, found in Psychrobacter cryohalolentis (strain ATCC BAA-1226 / DSM 17306 / VKM B-2378 / K5).